Here is a 240-residue protein sequence, read N- to C-terminus: Ribose-5-phosphate isomerase A (240 aa).

Residues Met1–Thr23 are disordered. Residues Thr32–Thr35, Asp92–Asp95, and Lys111–Gly114 contribute to the substrate site. Glu120 (proton acceptor) is an active-site residue. Substrate is bound at residue Lys138.

The protein belongs to the ribose 5-phosphate isomerase family. In terms of assembly, homodimer.

It carries out the reaction aldehydo-D-ribose 5-phosphate = D-ribulose 5-phosphate. It participates in carbohydrate degradation; pentose phosphate pathway; D-ribose 5-phosphate from D-ribulose 5-phosphate (non-oxidative stage): step 1/1. Functionally, catalyzes the reversible conversion of ribose-5-phosphate to ribulose 5-phosphate. This chain is Ribose-5-phosphate isomerase A, found in Halorubrum lacusprofundi (strain ATCC 49239 / DSM 5036 / JCM 8891 / ACAM 34).